We begin with the raw amino-acid sequence, 384 residues long: Na(+)/H(+) antiporter NhaA (384 aa).

11 helical membrane passes run 17 to 37, 53 to 73, 89 to 109, 118 to 138, 147 to 167, 171 to 191, 198 to 218, 251 to 271, 283 to 303, 321 to 341, and 354 to 374; these read SGLF…SAIA, LEYW…GLEL, MLPI…FLVM, GAGI…SLLG, IFLT…IAVF, TLLW…LILN, LIPY…SGVH, PVAF…VLSS, IGIA…LSML, ILAV…ITLL, and FVIL…LKYV.

It belongs to the NhaA Na(+)/H(+) (TC 2.A.33) antiporter family.

The protein localises to the cell inner membrane. It carries out the reaction Na(+)(in) + 2 H(+)(out) = Na(+)(out) + 2 H(+)(in). In terms of biological role, na(+)/H(+) antiporter that extrudes sodium in exchange for external protons. The polypeptide is Na(+)/H(+) antiporter NhaA (Flavobacterium psychrophilum (strain ATCC 49511 / DSM 21280 / CIP 103535 / JIP02/86)).